Reading from the N-terminus, the 417-residue chain is Tryptophan synthase beta chain (417 aa).

Lysine 99 is subject to N6-(pyridoxal phosphate)lysine.

It belongs to the TrpB family. In terms of assembly, tetramer of two alpha and two beta chains. Requires pyridoxal 5'-phosphate as cofactor.

It catalyses the reaction (1S,2R)-1-C-(indol-3-yl)glycerol 3-phosphate + L-serine = D-glyceraldehyde 3-phosphate + L-tryptophan + H2O. It functions in the pathway amino-acid biosynthesis; L-tryptophan biosynthesis; L-tryptophan from chorismate: step 5/5. Functionally, the beta subunit is responsible for the synthesis of L-tryptophan from indole and L-serine. This chain is Tryptophan synthase beta chain (trpB), found in Corynebacterium glutamicum (strain ATCC 13032 / DSM 20300 / JCM 1318 / BCRC 11384 / CCUG 27702 / LMG 3730 / NBRC 12168 / NCIMB 10025 / NRRL B-2784 / 534).